The primary structure comprises 74 residues: Serine rich endogenous peptide 16 (74 aa).

Residues 1–31 (MATKISHLVSLLLSLLLLLLFISSQVGFTEA) form the signal peptide. The disordered stretch occupies residues 29–74 (TEAKRDERKKMSSPPIPSPLIPSPPIPPPPPRFYVPPSKSRRGKGP). Residues 42–62 (PPIPSPLIPSPPIPPPPPRFY) are compositionally biased toward pro residues. The SCOOP motif motif lies at 60–74 (RFYVPPSKSRRGKGP). The SxS motif essential for MIK2 binding motif lies at 66–68 (SKS).

The protein belongs to the serine rich endogenous peptide (SCOOP) phytocytokine family. In terms of assembly, interacts with MIK2 (via extracellular leucine-rich repeat domain); this interaction triggers the formation of complex between MIK2 and the BAK1/SERK3 and SERK4 coreceptors, and subsequent BAK1 activation by phosphorylation.

The protein resides in the cell membrane. It localises to the secreted. It is found in the extracellular space. Its subcellular location is the apoplast. Brassicaceae-specific phytocytokine (plant endogenous peptide released into the apoplast) perceived by MIK2 in a BAK1/SERK3 and SERK4 coreceptors-dependent manner, that modulates various physiological and antimicrobial processes including growth prevention and reactive oxygen species (ROS) response regulation. The polypeptide is Serine rich endogenous peptide 16 (Arabidopsis thaliana (Mouse-ear cress)).